The chain runs to 196 residues: Putative 3-methyladenine DNA glycosylase (196 aa).

This sequence belongs to the DNA glycosylase MPG family.

This is Putative 3-methyladenine DNA glycosylase from Bacillus licheniformis (strain ATCC 14580 / DSM 13 / JCM 2505 / CCUG 7422 / NBRC 12200 / NCIMB 9375 / NCTC 10341 / NRRL NRS-1264 / Gibson 46).